The following is a 246-amino-acid chain: Acetoacetate decarboxylase (246 aa).

The Schiff-base intermediate with acetoacetate role is filled by K116.

The protein belongs to the ADC family.

It carries out the reaction acetoacetate + H(+) = acetone + CO2. In terms of biological role, catalyzes the conversion of acetoacetate to acetone and carbon dioxide. This is Acetoacetate decarboxylase from Burkholderia mallei (strain NCTC 10247).